The chain runs to 405 residues: S-adenosylmethionine synthase (405 aa).

Position 141 to 146 (141 to 146 (GQGSVD)) interacts with ATP.

It belongs to the AdoMet synthase 2 family. The cofactor is Mg(2+).

The catalysed reaction is L-methionine + ATP + H2O = S-adenosyl-L-methionine + phosphate + diphosphate. It participates in amino-acid biosynthesis; S-adenosyl-L-methionine biosynthesis; S-adenosyl-L-methionine from L-methionine: step 1/1. Functionally, catalyzes the formation of S-adenosylmethionine from methionine and ATP. The protein is S-adenosylmethionine synthase of Methanococcus maripaludis (strain C5 / ATCC BAA-1333).